A 66-amino-acid polypeptide reads, in one-letter code: Large ribosomal subunit protein bL33c (66 aa).

It belongs to the bacterial ribosomal protein bL33 family.

The protein localises to the plastid. It is found in the chloroplast. This is Large ribosomal subunit protein bL33c from Barbarea verna (Land cress).